Consider the following 206-residue polypeptide: Inosine triphosphate pyrophosphatase (206 aa).

An ITP-binding site is contributed by 21-26; the sequence is TGNAKK. Residue E49 coordinates Mg(2+). ITP contacts are provided by residues K61, 77 to 78, K94, 153 to 156, K176, and 181 to 182; these read DT, FGWD, and HR.

This sequence belongs to the HAM1 NTPase family. Homodimer. Requires Mg(2+) as cofactor. Mn(2+) serves as cofactor.

It is found in the cytoplasm. It catalyses the reaction ITP + H2O = IMP + diphosphate + H(+). The enzyme catalyses dITP + H2O = dIMP + diphosphate + H(+). The catalysed reaction is XTP + H2O = XMP + diphosphate + H(+). Its function is as follows. Pyrophosphatase that hydrolyzes non-canonical purine nucleotides such as inosine triphosphate (ITP), deoxyinosine triphosphate (dITP) or xanthosine 5'-triphosphate (XTP) to their respective monophosphate derivatives. The enzyme does not distinguish between the deoxy- and ribose forms. Probably excludes non-canonical purines from RNA and DNA precursor pools, thus preventing their incorporation into RNA and DNA and avoiding chromosomal lesions. The protein is Inosine triphosphate pyrophosphatase of Vitis vinifera (Grape).